We begin with the raw amino-acid sequence, 299 residues long: Taste receptor type 2 member 50 (299 aa).

Position 1 (M1) is a topological domain, extracellular. A helical transmembrane segment spans residues 2–22 (IPFLHIFFSVLILVLFVLGNF). Residues 23–55 (ANGFIALVNFIDWVKRKKISLADQILTALAVSR) are Cytoplasmic-facing. The helical transmembrane segment at 56–76 (VGLLWALLLNWYLTELNPAFY) threads the bilayer. Residues 77–87 (SVELRITSYNA) are Extracellular-facing. Residues 88-108 (WVVTNHFSMWLAASLSIFYLL) form a helical membrane-spanning segment. The Cytoplasmic segment spans residues 109–126 (KIANFSNLSFLNLKRRVR). The helical transmembrane segment at 127–147 (SIILVILLGSLLFLVCHLLAV) threads the bilayer. Residues 148-181 (NMDENMWTEEYEGNMTGKMKLRNAAHLSYMTVTT) are Extracellular-facing. N161 carries N-linked (GlcNAc...) asparagine glycosylation. The chain crosses the membrane as a helical span at residues 182-202 (LWSFIPFMLSLISFLMLIFSL). Topologically, residues 203-229 (CKHLKKMQLHGEGSRDPSTTVHIKALQ) are cytoplasmic. Residues 230 to 250 (TLISFLLLCAIFFLFLIISVW) form a helical membrane-spanning segment. Residues 251 to 259 (SPRRLQNEP) lie on the Extracellular side of the membrane. A helical membrane pass occupies residues 260–280 (VFMVCKAVGNIYLSFDSFVLI). The Cytoplasmic portion of the chain corresponds to 281–299 (WRTKKLKHIFLLILCQIRC).

This sequence belongs to the G-protein coupled receptor T2R family.

The protein resides in the membrane. Functionally, receptor that may play a role in the perception of bitterness and is gustducin-linked. May play a role in sensing the chemical composition of the gastrointestinal content. The activity of this receptor may stimulate alpha gustducin, mediate PLC-beta-2 activation and lead to the gating of TRPM5. This chain is Taste receptor type 2 member 50 (TAS2R50), found in Macaca mulatta (Rhesus macaque).